Reading from the N-terminus, the 172-residue chain is Large ribosomal subunit protein uL10 (172 aa).

It belongs to the universal ribosomal protein uL10 family. In terms of assembly, part of the ribosomal stalk of the 50S ribosomal subunit. The N-terminus interacts with L11 and the large rRNA to form the base of the stalk. The C-terminus forms an elongated spine to which L12 dimers bind in a sequential fashion forming a multimeric L10(L12)X complex.

Its function is as follows. Forms part of the ribosomal stalk, playing a central role in the interaction of the ribosome with GTP-bound translation factors. This is Large ribosomal subunit protein uL10 from Beijerinckia indica subsp. indica (strain ATCC 9039 / DSM 1715 / NCIMB 8712).